Consider the following 66-residue polypeptide: Ocellatin-PT2 (66 aa).

An N-terminal signal peptide occupies residues 1–22; it reads MAFLKKSLFLVLFLGLVSLSIC. The propeptide occupies 23–39; sequence DEEKRQDEDDDDDDDEE. At Val66 the chain carries Valine amide.

In terms of tissue distribution, expressed by the skin glands.

Its subcellular location is the secreted. In terms of biological role, has no antibacterial activity against Gram-negative bacteria E.coli ATCC 25922, S.pneumoniae ATCC 700603 and S.choleraesuis ATCC 14028 or against Gram-positive bacterium S.aureus ATCC 29313. Shows no hemolytic activity and no cytotoxicity. This is Ocellatin-PT2 from Leptodactylus pustulatus (Ceara white-lipped frog).